The sequence spans 223 residues: Ribonuclease 3 (223 aa).

The RNase III domain occupies 4 to 127 (LENLQKLLGY…VMGAVYLEAG (124 aa)). Glu40 contacts Mg(2+). Asp44 is a catalytic residue. 2 residues coordinate Mg(2+): Asp113 and Glu116. The active site involves Glu116. The DRBM domain maps to 154–223 (DYKTALQEIT…AKIALEKMKK (70 aa)).

This sequence belongs to the ribonuclease III family. As to quaternary structure, homodimer. Mg(2+) is required as a cofactor.

Its subcellular location is the cytoplasm. It catalyses the reaction Endonucleolytic cleavage to 5'-phosphomonoester.. Digests double-stranded RNA. Involved in the processing of primary rRNA transcript to yield the immediate precursors to the large and small rRNAs (23S and 16S). Processes some mRNAs, and tRNAs when they are encoded in the rRNA operon. Processes pre-crRNA and tracrRNA of type II CRISPR loci if present in the organism. The polypeptide is Ribonuclease 3 (Campylobacter curvus (strain 525.92)).